Reading from the N-terminus, the 249-residue chain is 3-deoxy-manno-octulosonate cytidylyltransferase (249 aa).

This sequence belongs to the KdsB family.

It is found in the cytoplasm. The catalysed reaction is 3-deoxy-alpha-D-manno-oct-2-ulosonate + CTP = CMP-3-deoxy-beta-D-manno-octulosonate + diphosphate. Its pathway is nucleotide-sugar biosynthesis; CMP-3-deoxy-D-manno-octulosonate biosynthesis; CMP-3-deoxy-D-manno-octulosonate from 3-deoxy-D-manno-octulosonate and CTP: step 1/1. The protein operates within bacterial outer membrane biogenesis; lipopolysaccharide biosynthesis. Functionally, activates KDO (a required 8-carbon sugar) for incorporation into bacterial lipopolysaccharide in Gram-negative bacteria. This is 3-deoxy-manno-octulosonate cytidylyltransferase from Oleidesulfovibrio alaskensis (strain ATCC BAA-1058 / DSM 17464 / G20) (Desulfovibrio alaskensis).